The chain runs to 327 residues: MVAVKALLFACTLQTCVFKPCCDMAIFLIFLNAFIWSSSFALSKSAMEAAAPLFVTGSRMVLAGVVLFGLLLCKRESLRLPRPAIMPIVLLSVIGFYLTNVLEFIGLQGLSSSTACFIYGFSPFTAAFCSYVQLREVVTWKKLGGLSLGLVSYLVYLLFGGSEDVAEWGWQLGLPELLLIAATCLSSYGWTLLRKLGRRCESLSMTAINAYAMVIAGVLSLIHSAVTEVWNPVPVENPLLFLQAIGALVIFSNLICYNLFAKLLRSFSSTFLSFCNLVMPLFASFFGWLLLGESFPPGLLFAVGFMVLGCRLIYHEEFRQGYVLTSE.

Transmembrane regions (helical) follow at residues 22-42 (CDMAIFLIFLNAFIWSSSFAL), 53-73 (LFVTGSRMVLAGVVLFGLLLC), 85-105 (IMPIVLLSVIGFYLTNVLEFI), 114-134 (TACFIYGFSPFTAAFCSYVQL), 143-163 (LGGLSLGLVSYLVYLLFGGSE), 165-185 (VAEWGWQLGLPELLLIAATCL), 202-222 (SLSMTAINAYAMVIAGVLSLI), 240-260 (LFLQAIGALVIFSNLICYNLF), 271-291 (FLSFCNLVMPLFASFFGWLLL), and 294-314 (SFPPGLLFAVGFMVLGCRLIY). The region spanning 34–157 (FIWSSSFALS…LGLVSYLVYL (124 aa)) is the EamA 1 domain. The EamA 2 domain maps to 189 to 313 (GWTLLRKLGR…GFMVLGCRLI (125 aa)).

Belongs to the drug/metabolite transporter (DMT) superfamily. 10 TMS drug/metabolite exporter (DME) (TC 2.A.7.3) family.

The protein localises to the cell membrane. Its function is as follows. Transports S-adenosylmethionine (SAM) and S-adenosylhomocysteine (SAH). Allows bacteria to acquire SAM from the eukaryotic host cell and to likely remove the toxic by-product SAH. This chain is S-adenosylmethionine/S-adenosylhomocysteine transporter, found in Chlamydia trachomatis serovar D (strain ATCC VR-885 / DSM 19411 / UW-3/Cx).